Reading from the N-terminus, the 312-residue chain is uncharacterized protein (312 aa).

Positions 95 to 119 (EKRRENPPKLTLPPLPPPAEERKKP) are disordered.

It is found in the plastid. It localises to the chloroplast. This is an uncharacterized protein from Chlamydomonas moewusii (Chlamydomonas eugametos).